The following is a 151-amino-acid chain: Lipoprotein signal peptidase (151 aa).

Helical transmembrane passes span 3–23, 59–79, and 85–107; these read LYIILGLLILVGDQLLKGWIV, WFFYIVTIIAVGVIGYLFYTS, and LYRIGLTLMLAGALGNFIDRLHL. Catalysis depends on residues D112 and D128. Residues 123 to 143 form a helical membrane-spanning segment; it reads IFNVADTALTCGVICVFIAIL.

Belongs to the peptidase A8 family.

It localises to the cell membrane. It carries out the reaction Release of signal peptides from bacterial membrane prolipoproteins. Hydrolyzes -Xaa-Yaa-Zaa-|-(S,diacylglyceryl)Cys-, in which Xaa is hydrophobic (preferably Leu), and Yaa (Ala or Ser) and Zaa (Gly or Ala) have small, neutral side chains.. Its pathway is protein modification; lipoprotein biosynthesis (signal peptide cleavage). This protein specifically catalyzes the removal of signal peptides from prolipoproteins. This chain is Lipoprotein signal peptidase, found in Latilactobacillus sakei subsp. sakei (strain 23K) (Lactobacillus sakei subsp. sakei).